The sequence spans 326 residues: MKTSESTDRFGGVAGETTNRTVLLLAHTGRPAALRSARLVHESLTRAGVTVRMLASEIEAIRKTGARMQPVEVVEPGADAAAGTELIMVLGGDGTLLRAAELARPAGAPLLGVNLGHVGFLAEAERDDLSDTVRCVVERDYSVEERMTIDVAVYNGGRTSAAPAVRTWALNEATAEKVESGRMLEVVLEIDGRPLSRWGCDGVVCATPTGSTAHAFSGGGPIVWPSVEALLVVPLSAHALFARPLVVAPDAVIALEVLPETTDGVLWCDGRRRVELPAGARVEISRSKTPVRLARLQQAPFTNRLVAKFALPVAGWRGRAAERDSG.

Asp93 (proton acceptor) is an active-site residue. Residues 93 to 94 (DG), Arg98, 171 to 172 (NE), Arg182, Asp201, and 212 to 217 (TAHAFS) each bind NAD(+).

It belongs to the NAD kinase family. A divalent metal cation is required as a cofactor.

It is found in the cytoplasm. It carries out the reaction NAD(+) + ATP = ADP + NADP(+) + H(+). In terms of biological role, involved in the regulation of the intracellular balance of NAD and NADP, and is a key enzyme in the biosynthesis of NADP. Catalyzes specifically the phosphorylation on 2'-hydroxyl of the adenosine moiety of NAD to yield NADP. This chain is NAD kinase, found in Thermobifida fusca (strain YX).